Consider the following 610-residue polypeptide: UvrABC system protein C (610 aa).

Residues 13 to 91 (HLPGVYRMYD…IKENQPKYNV (79 aa)) form the GIY-YIG domain. Positions 201-236 (GQVIEHLVQKMENAAQELDFEAAARFRDQIQSVRAV) constitute a UVR domain.

It belongs to the UvrC family. In terms of assembly, interacts with UvrB in an incision complex.

Its subcellular location is the cytoplasm. In terms of biological role, the UvrABC repair system catalyzes the recognition and processing of DNA lesions. UvrC both incises the 5' and 3' sides of the lesion. The N-terminal half is responsible for the 3' incision and the C-terminal half is responsible for the 5' incision. This chain is UvrABC system protein C, found in Actinobacillus pleuropneumoniae serotype 3 (strain JL03).